A 364-amino-acid chain; its full sequence is Chorismate synthase (364 aa).

2 residues coordinate NADP(+): Arg48 and Arg54. FMN-binding positions include 130–132, 242–243, Gly287, 302–306, and Arg328; these read RSS, NA, and KPTSS.

It belongs to the chorismate synthase family. Homotetramer. FMNH2 serves as cofactor.

It catalyses the reaction 5-O-(1-carboxyvinyl)-3-phosphoshikimate = chorismate + phosphate. It participates in metabolic intermediate biosynthesis; chorismate biosynthesis; chorismate from D-erythrose 4-phosphate and phosphoenolpyruvate: step 7/7. In terms of biological role, catalyzes the anti-1,4-elimination of the C-3 phosphate and the C-6 proR hydrogen from 5-enolpyruvylshikimate-3-phosphate (EPSP) to yield chorismate, which is the branch point compound that serves as the starting substrate for the three terminal pathways of aromatic amino acid biosynthesis. This reaction introduces a second double bond into the aromatic ring system. The polypeptide is Chorismate synthase (Allorhizobium ampelinum (strain ATCC BAA-846 / DSM 112012 / S4) (Agrobacterium vitis (strain S4))).